Here is a 758-residue protein sequence, read N- to C-terminus: Transmembrane E3 ubiquitin-protein ligase 1 (758 aa).

Residues 1–26 (MEIDGNTLVFIIVILFLFFSSPGGDG) form the signal peptide. Residues 27 to 398 (VSSQYEFNQL…YELKIMSIRK (372 aa)) lie on the Lumenal side of the membrane. A helical transmembrane segment spans residues 399–419 (HLLFGIALFAAQIYLLLTQMH). Residues 420–431 (HTNTPSMVNKIS) lie on the Cytoplasmic side of the membrane. A helical transmembrane segment spans residues 432–452 (FYCFSMINLVDGSLATLYFVA). Topologically, residues 453-458 (ASVVPE) are lumenal. A helical membrane pass occupies residues 459–479 (LYLPLVISAFSCFILASIFEI). Residues 480–523 (RYLISIYASQVNEQNVGIINLLRGNTGTYDENRPRPAFIPDEGS) lie on the Cytoplasmic side of the membrane. The helical transmembrane segment at 524–544 (IGGSLYGRFFFMLIIFTFLIL) threads the bilayer. Residues 545–553 (SSTSWPRQL) are Lumenal-facing. The helical transmembrane segment at 554–574 (RMVFEYILIFILNSYWIPQIF) threads the bilayer. Residues 575–602 (RNAVKGIPSRRERARSSIGGNRSQNKMP) are Cytoplasmic-facing. The chain crosses the membrane as a helical span at residues 603–623 (LLWSFVIGTTIIRSLPVVYVF). Over 624–635 (TYSSNVFRHHKD) the chain is Lumenal. Residues 636–656 (VHFVVFLSLWLLFQISILYSQ) traverse the membrane as a helical segment. Topologically, residues 657–758 (DVLGSRWFLP…PVCRSPLPPL (102 aa)) are cytoplasmic. The segment at 699-752 (CAICMSDVPIYIEEIPETHKVDQHSYMVTPCNHVFHTSCLENWMNYKLQCPVCR) adopts an RING-type; atypical zinc-finger fold.

Component of the DSC E3 ligase complexes composed of at least TUL1, DSC2, DSC3, UBX3, CDC48 as well as VLD1 for the vacuole-localized complex or GLD1 for the Golgi/endosome-localized complex. Interacts with UBC4.

It localises to the golgi apparatus membrane. It catalyses the reaction S-ubiquitinyl-[E2 ubiquitin-conjugating enzyme]-L-cysteine + [acceptor protein]-L-lysine = [E2 ubiquitin-conjugating enzyme]-L-cysteine + N(6)-ubiquitinyl-[acceptor protein]-L-lysine.. The protein operates within protein modification; protein ubiquitination. Its function is as follows. Catalytic component of the DSC E3 ubiquitin ligase complexes that tag proteins present in Golgi, endosome and vacuole membranes and function in protein homeostasis under non-stress conditions and support a role in protein quality control. Mediates ubiquitination of vacuolar proteins such as CPS1, PPN1, PEP12 and other proteins containing exposed hydrophilic residues within their transmembrane domains, leading to their sorting into internal vesicles in late endosomes. Targets also the unpalmitoylated endosomal SNARE TLG1 to the MVB pathway. This chain is Transmembrane E3 ubiquitin-protein ligase 1 (TUL1), found in Saccharomyces cerevisiae (strain ATCC 204508 / S288c) (Baker's yeast).